The following is a 234-amino-acid chain: MTNQLIYKGKAKDIYSTKDENVIRTVYKDQATMLNGARKETIDGKGALNNQISSLIFEKLNKAGVVTHYIEQISKNEQLNKKVDIIPLEVVLRNVTAGSFSKRFGVEEGHVLETPIVEFYYKNDDLDDPFINDEHVKFLGIVNDEEIAYLKGETRRINELLKGWFAQIGLNLIDFKLEFGFDQEGTIILADEFSPDNCRLWDKNGNHMDKDVFRRDLGNLTDVYQVVLEKLIAL.

Belongs to the SAICAR synthetase family.

It carries out the reaction 5-amino-1-(5-phospho-D-ribosyl)imidazole-4-carboxylate + L-aspartate + ATP = (2S)-2-[5-amino-1-(5-phospho-beta-D-ribosyl)imidazole-4-carboxamido]succinate + ADP + phosphate + 2 H(+). The protein operates within purine metabolism; IMP biosynthesis via de novo pathway; 5-amino-1-(5-phospho-D-ribosyl)imidazole-4-carboxamide from 5-amino-1-(5-phospho-D-ribosyl)imidazole-4-carboxylate: step 1/2. This chain is Phosphoribosylaminoimidazole-succinocarboxamide synthase, found in Streptococcus pyogenes serotype M1.